The sequence spans 383 residues: Lipoyl synthase, mitochondrial (383 aa).

A mitochondrion-targeting transit peptide spans methionine 1–leucine 19. The disordered stretch occupies residues aspartate 69–glycine 97. Cysteine 116, cysteine 121, cysteine 127, cysteine 147, cysteine 151, cysteine 154, and serine 362 together coordinate [4Fe-4S] cluster. The Radical SAM core domain occupies lysine 132–leucine 351.

It belongs to the radical SAM superfamily. Lipoyl synthase family. [4Fe-4S] cluster serves as cofactor.

The protein resides in the mitochondrion. The enzyme catalyses [[Fe-S] cluster scaffold protein carrying a second [4Fe-4S](2+) cluster] + N(6)-octanoyl-L-lysyl-[protein] + 2 oxidized [2Fe-2S]-[ferredoxin] + 2 S-adenosyl-L-methionine + 4 H(+) = [[Fe-S] cluster scaffold protein] + N(6)-[(R)-dihydrolipoyl]-L-lysyl-[protein] + 4 Fe(3+) + 2 hydrogen sulfide + 2 5'-deoxyadenosine + 2 L-methionine + 2 reduced [2Fe-2S]-[ferredoxin]. It participates in protein modification; protein lipoylation via endogenous pathway; protein N(6)-(lipoyl)lysine from octanoyl-[acyl-carrier-protein]: step 2/2. Catalyzes the radical-mediated insertion of two sulfur atoms into the C-6 and C-8 positions of the octanoyl moiety bound to the lipoyl domains of lipoate-dependent enzymes, thereby converting the octanoylated domains into lipoylated derivatives. The protein is Lipoyl synthase, mitochondrial of Phytophthora infestans (strain T30-4) (Potato late blight agent).